The chain runs to 624 residues: Ubiquitin-associated and SH3 domain-containing protein A (624 aa).

Residues 19-60 (RSTPSLLDPLLAMGFPTHTALKALAATGRKTAEAAADWLHGH) enclose the UBA domain. An SH3 domain is found at 238 to 303 (VHYQTLKALF…PENYTERANE (66 aa)). Residues 358–624 (RRGILVVRHG…FNWRNWISSN (267 aa)) form a phosphatase-like region.

As to quaternary structure, homodimer or homooligomer. Interacts with CBL. Part of a complex containing CBL and activated EGFR. Interacts with ubiquitin and with mono-ubiquitinated proteins. Interacts with dynamin.

It localises to the cytoplasm. The protein resides in the nucleus. Functionally, interferes with CBL-mediated down-regulation and degradation of receptor-type tyrosine kinases. Promotes accumulation of activated target receptors, such as T-cell receptors, EGFR and PDGFRB, on the cell surface. May inhibit dynamin-dependent endocytic pathways by functionally sequestering dynamin via its SH3 domain. Exhibits negligible protein tyrosine phosphatase activity at neutral pH. May act as a dominant-negative regulator of UBASH3B-dependent dephosphorylation. This chain is Ubiquitin-associated and SH3 domain-containing protein A (Ubash3a), found in Mus musculus (Mouse).